A 228-amino-acid polypeptide reads, in one-letter code: Ribonuclease 3 (228 aa).

Residues 5 to 127 form the RNase III domain; it reads KDALQDRLGY…LFGAIYLDGG (123 aa). E40 lines the Mg(2+) pocket. The active site involves D44. Residues D113 and E116 each contribute to the Mg(2+) site. E116 is a catalytic residue. The DRBM domain occupies 154-224; the sequence is DPKTRLQEHL…AEQMLKRLED (71 aa). The disordered stretch occupies residues 200-228; the sequence is AEGEAGSRRKAEQQAAEQMLKRLEDKHER. The span at 218–228 shows a compositional bias: basic and acidic residues; the sequence is MLKRLEDKHER.

This sequence belongs to the ribonuclease III family. Homodimer. The cofactor is Mg(2+).

The protein resides in the cytoplasm. The enzyme catalyses Endonucleolytic cleavage to 5'-phosphomonoester.. In terms of biological role, digests double-stranded RNA. Involved in the processing of primary rRNA transcript to yield the immediate precursors to the large and small rRNAs (23S and 16S). Processes some mRNAs, and tRNAs when they are encoded in the rRNA operon. Processes pre-crRNA and tracrRNA of type II CRISPR loci if present in the organism. The sequence is that of Ribonuclease 3 from Alkalilimnicola ehrlichii (strain ATCC BAA-1101 / DSM 17681 / MLHE-1).